The sequence spans 156 residues: Small ribosomal subunit protein uS7 (156 aa).

This sequence belongs to the universal ribosomal protein uS7 family. As to quaternary structure, part of the 30S ribosomal subunit. Contacts proteins S9 and S11.

In terms of biological role, one of the primary rRNA binding proteins, it binds directly to 16S rRNA where it nucleates assembly of the head domain of the 30S subunit. Is located at the subunit interface close to the decoding center, probably blocks exit of the E-site tRNA. The chain is Small ribosomal subunit protein uS7 from Campylobacter concisus (strain 13826).